A 448-amino-acid chain; its full sequence is Phosphoglucosamine mutase (448 aa).

Residue S100 is the Phosphoserine intermediate of the active site. S100, D240, D242, and D244 together coordinate Mg(2+). S100 carries the phosphoserine modification.

The protein belongs to the phosphohexose mutase family. Mg(2+) is required as a cofactor. Activated by phosphorylation.

The catalysed reaction is alpha-D-glucosamine 1-phosphate = D-glucosamine 6-phosphate. Catalyzes the conversion of glucosamine-6-phosphate to glucosamine-1-phosphate. The polypeptide is Phosphoglucosamine mutase (Bacillus pumilus (strain SAFR-032)).